A 394-amino-acid polypeptide reads, in one-letter code: 4-hydroxybenzoate 3-monooxygenase (NAD(P)H) (394 aa).

FAD is bound by residues Glu32, Thr42 to Val47, and Gln102. Substrate contacts are provided by residues Tyr203, Ser214 to Arg216, and Tyr224. Position 288 (Asp288) interacts with FAD. A substrate-binding site is contributed by Pro295. Leu301–Asn302 serves as a coordination point for FAD.

This sequence belongs to the aromatic-ring hydroxylase family. It depends on FAD as a cofactor.

It catalyses the reaction 4-hydroxybenzoate + NADH + O2 + H(+) = 3,4-dihydroxybenzoate + NAD(+) + H2O. The enzyme catalyses 4-hydroxybenzoate + NADPH + O2 + H(+) = 3,4-dihydroxybenzoate + NADP(+) + H2O. Functionally, involved in the degradation of 4-hydroxybenzoate (4HB) via the protocatechuate (PCA) 2,3-cleavage pathway. Catalyzes the conversion of 4HB into 2-hydroxypenta-2,4-dienoate (HPD). It is highly specific for 4-hydroxybenzoate, and is able to utilize both NADH and NADPH as electron donors at approximately equal rates. The sequence is that of 4-hydroxybenzoate 3-monooxygenase (NAD(P)H) (praI) from Paenibacillus sp.